Reading from the N-terminus, the 258-residue chain is Imidazole glycerol phosphate synthase subunit HisF (258 aa).

Catalysis depends on residues aspartate 11 and aspartate 130.

Belongs to the HisA/HisF family. In terms of assembly, heterodimer of HisH and HisF.

It is found in the cytoplasm. It carries out the reaction 5-[(5-phospho-1-deoxy-D-ribulos-1-ylimino)methylamino]-1-(5-phospho-beta-D-ribosyl)imidazole-4-carboxamide + L-glutamine = D-erythro-1-(imidazol-4-yl)glycerol 3-phosphate + 5-amino-1-(5-phospho-beta-D-ribosyl)imidazole-4-carboxamide + L-glutamate + H(+). It functions in the pathway amino-acid biosynthesis; L-histidine biosynthesis; L-histidine from 5-phospho-alpha-D-ribose 1-diphosphate: step 5/9. In terms of biological role, IGPS catalyzes the conversion of PRFAR and glutamine to IGP, AICAR and glutamate. The HisF subunit catalyzes the cyclization activity that produces IGP and AICAR from PRFAR using the ammonia provided by the HisH subunit. This chain is Imidazole glycerol phosphate synthase subunit HisF, found in Methylobacterium sp. (strain 4-46).